A 358-amino-acid polypeptide reads, in one-letter code: Leukotriene B4 receptor 2 (358 aa).

Over 1–24 the chain is Extracellular; the sequence is MSVCYRPPGNETLLSWKTSRATGT. Asn10 carries an N-linked (GlcNAc...) asparagine glycan. The helical transmembrane segment at 25-45 threads the bilayer; the sequence is AFLLLAALLGLPGNGFVVWSL. The Cytoplasmic segment spans residues 46–60; the sequence is AGWRPARGRPLAATL. Residues 61 to 81 traverse the membrane as a helical segment; that stretch reads VLHLALADGAVLLLTPLFVAF. Residues 82-96 lie on the Extracellular side of the membrane; sequence LTRQAWPLGQAGCKA. Residues 97–117 traverse the membrane as a helical segment; that stretch reads VYYVCALSMYASVLLTGLLSL. Residues 118-140 lie on the Cytoplasmic side of the membrane; it reads QRCLAVTRPFLAPRLRSPALARR. A helical transmembrane segment spans residues 141–161; sequence LLLAVWLAALLLAVPAAVYRH. Over 162 to 185 the chain is Extracellular; that stretch reads LWRDRVCQLCHPSPVHAAAHLSLE. The helical transmembrane segment at 186–206 threads the bilayer; it reads TLTAFVLPFGLMLGCYSVTLA. Topologically, residues 207-224 are cytoplasmic; sequence RLRGARWGSGRHGARVGR. Residues 225 to 245 traverse the membrane as a helical segment; it reads LVSAIVLAFGLLWAPYHAVNL. Over 246–275 the chain is Extracellular; it reads LQAVAALAPPEGALAKLGGAGQAARAGTTA. The helical transmembrane segment at 276–296 threads the bilayer; it reads LAFFSSSVNPVLYVFTAGDLL. Topologically, residues 297–358 are cytoplasmic; it reads PRAGPRFLTR…MEKDGPEWDL (62 aa). The disordered stretch occupies residues 311–358; it reads SGEARGGGRSREGTMELRTTPQLKVVGQGRGNGDPGGGMEKDGPEWDL. Positions 338 to 348 are enriched in gly residues; the sequence is QGRGNGDPGGG. A compositionally biased stretch (basic and acidic residues) spans 349 to 358; sequence MEKDGPEWDL.

Belongs to the G-protein coupled receptor 1 family. In terms of tissue distribution, widely expressed.

It localises to the cell membrane. Functionally, low-affinity receptor for leukotrienes including leukotriene B4. Mediates chemotaxis of granulocytes and macrophages. The response is mediated via G-proteins that activate a phosphatidylinositol-calcium second messenger system. The rank order of affinities for the leukotrienes is LTB4 &gt; 12-epi-LTB4 &gt; LTB5 &gt; LTB3. The chain is Leukotriene B4 receptor 2 (LTB4R2) from Homo sapiens (Human).